Here is a 126-residue protein sequence, read N- to C-terminus: UPF0332 protein glr0978 (126 aa).

It belongs to the UPF0332 family.

In Gloeobacter violaceus (strain ATCC 29082 / PCC 7421), this protein is UPF0332 protein glr0978.